Reading from the N-terminus, the 285-residue chain is Bifunctional protein FolD (285 aa).

Residues 163–165 (GRS), serine 188, and alanine 231 contribute to the NADP(+) site.

It belongs to the tetrahydrofolate dehydrogenase/cyclohydrolase family. Homodimer.

The enzyme catalyses (6R)-5,10-methylene-5,6,7,8-tetrahydrofolate + NADP(+) = (6R)-5,10-methenyltetrahydrofolate + NADPH. It catalyses the reaction (6R)-5,10-methenyltetrahydrofolate + H2O = (6R)-10-formyltetrahydrofolate + H(+). Its pathway is one-carbon metabolism; tetrahydrofolate interconversion. In terms of biological role, catalyzes the oxidation of 5,10-methylenetetrahydrofolate to 5,10-methenyltetrahydrofolate and then the hydrolysis of 5,10-methenyltetrahydrofolate to 10-formyltetrahydrofolate. The sequence is that of Bifunctional protein FolD from Oenococcus oeni (strain ATCC BAA-331 / PSU-1).